Here is a 466-residue protein sequence, read N- to C-terminus: Ribulose bisphosphate carboxylase (466 aa).

A substrate-binding site is contributed by Asn-111. Catalysis depends on Lys-166, which acts as the Proton acceptor. Lys-168 contributes to the substrate binding site. Mg(2+)-binding residues include Lys-191, Asp-193, and Glu-194. Lys-191 bears the N6-carboxylysine mark. The active-site Proton acceptor is the His-287. Residues Arg-288, His-321, and Ser-368 each contribute to the substrate site.

Belongs to the RuBisCO large chain family. Type II subfamily. Homodimer. Mg(2+) serves as cofactor.

It catalyses the reaction 2 (2R)-3-phosphoglycerate + 2 H(+) = D-ribulose 1,5-bisphosphate + CO2 + H2O. The catalysed reaction is D-ribulose 1,5-bisphosphate + O2 = 2-phosphoglycolate + (2R)-3-phosphoglycerate + 2 H(+). Its function is as follows. RuBisCO catalyzes two reactions: the carboxylation of D-ribulose 1,5-bisphosphate, the primary event in carbon dioxide fixation, as well as the oxidative fragmentation of the pentose substrate. Both reactions occur simultaneously and in competition at the same active site. This is Ribulose bisphosphate carboxylase (cbbM) from Rhodospirillum rubrum.